The sequence spans 192 residues: Probable metallophosphoesterase MJ0623 (192 aa).

7 residues coordinate a divalent metal cation: Asp-41, His-43, Asp-70, Asn-92, His-115, His-144, and His-146.

The protein belongs to the metallophosphoesterase superfamily. YfcE family. A divalent metal cation serves as cofactor.

The protein is Probable metallophosphoesterase MJ0623 of Methanocaldococcus jannaschii (strain ATCC 43067 / DSM 2661 / JAL-1 / JCM 10045 / NBRC 100440) (Methanococcus jannaschii).